Here is a 244-residue protein sequence, read N- to C-terminus: Coenzyme Q-binding protein COQ10 homolog B, mitochondrial (244 aa).

This sequence belongs to the COQ10 family. In terms of assembly, interacts with coenzyme Q.

The protein resides in the mitochondrion inner membrane. Its function is as follows. Required for the function of coenzyme Q in the respiratory chain. May serve as a chaperone or may be involved in the transport of Q6 from its site of synthesis to the catalytic sites of the respiratory complexes. The chain is Coenzyme Q-binding protein COQ10 homolog B, mitochondrial (coq10b) from Xenopus laevis (African clawed frog).